A 194-amino-acid chain; its full sequence is Adenylate kinase (194 aa).

Residue 11 to 16 participates in ATP binding; that stretch reads GSGKGT. The tract at residues 31 to 60 is NMP; the sequence is STGELLRAEIKAQTELGQAAAGYINEGHLV. AMP contacts are provided by residues T32, R37, 58 to 60, 86 to 89, and Q93; these read HLV and GFPR. The tract at residues 127–137 is LID; it reads NRGKVSGRSDD. R128 contacts ATP. Residues R134 and R145 each contribute to the AMP site. G173 is an ATP binding site.

Belongs to the adenylate kinase family. In terms of assembly, monomer.

Its subcellular location is the cytoplasm. It catalyses the reaction AMP + ATP = 2 ADP. The protein operates within purine metabolism; AMP biosynthesis via salvage pathway; AMP from ADP: step 1/1. Its function is as follows. Catalyzes the reversible transfer of the terminal phosphate group between ATP and AMP. Plays an important role in cellular energy homeostasis and in adenine nucleotide metabolism. This chain is Adenylate kinase, found in Porphyromonas gingivalis (strain ATCC BAA-308 / W83).